The sequence spans 189 residues: UPF0398 protein lp_1753 (189 aa).

This sequence belongs to the UPF0398 family.

This is UPF0398 protein lp_1753 from Lactiplantibacillus plantarum (strain ATCC BAA-793 / NCIMB 8826 / WCFS1) (Lactobacillus plantarum).